A 39-amino-acid polypeptide reads, in one-letter code: Anthranilate phosphoribosyltransferase (39 aa).

The protein belongs to the anthranilate phosphoribosyltransferase family. As to quaternary structure, homodimer.

The catalysed reaction is N-(5-phospho-beta-D-ribosyl)anthranilate + diphosphate = 5-phospho-alpha-D-ribose 1-diphosphate + anthranilate. It participates in amino-acid biosynthesis; L-tryptophan biosynthesis; L-tryptophan from chorismate: step 2/5. Catalyzes the transfer of the phosphoribosyl group of 5-phosphorylribose-1-pyrophosphate (PRPP) to anthranilate to yield N-(5'-phosphoribosyl)-anthranilate (PRA). The protein is Anthranilate phosphoribosyltransferase (trpD) of Pectobacterium carotovorum (Erwinia carotovora).